Reading from the N-terminus, the 594-residue chain is Ferredoxin--nitrite reductase, chloroplastic (594 aa).

The transit peptide at 1–32 (MASLPVNKIIPSSTTLLSSSNNNRRRNNSSIR) directs the protein to the chloroplast. The segment covering 13-22 (STTLLSSSNN) has biased composition (low complexity). Positions 13-36 (STTLLSSSNNNRRRNNSSIRCQKA) are disordered. 4 residues coordinate [4Fe-4S] cluster: cysteine 473, cysteine 479, cysteine 514, and cysteine 518. Siroheme is bound at residue cysteine 518.

The protein belongs to the nitrite and sulfite reductase 4Fe-4S domain family. As to quaternary structure, monomer. The cofactor is siroheme. [4Fe-4S] cluster is required as a cofactor.

The protein resides in the plastid. It is found in the chloroplast. The catalysed reaction is 6 oxidized [2Fe-2S]-[ferredoxin] + NH4(+) + 2 H2O = nitrite + 6 reduced [2Fe-2S]-[ferredoxin] + 8 H(+). It functions in the pathway nitrogen metabolism; nitrate reduction (assimilation). This chain is Ferredoxin--nitrite reductase, chloroplastic (NIR), found in Spinacia oleracea (Spinach).